The sequence spans 196 residues: Putative NADH dehydrogenase/NAD(P)H nitroreductase XOO4023 (196 aa).

This sequence belongs to the nitroreductase family. HadB/RutE subfamily. It depends on FMN as a cofactor.

The chain is Putative NADH dehydrogenase/NAD(P)H nitroreductase XOO4023 from Xanthomonas oryzae pv. oryzae (strain MAFF 311018).